Here is a 143-residue protein sequence, read N- to C-terminus: Hemoglobin cathodic subunit alpha (143 aa).

Position 2 is an N-acetylserine (Ser-2). A Globin domain is found at Ser-2 to Arg-143. An O2-binding site is contributed by His-60. Position 89 (His-89) interacts with heme b.

This sequence belongs to the globin family. In terms of assembly, heterotetramer of two alpha chains and two beta chains. As to expression, red blood cells.

Involved in oxygen transport from gills to the various peripheral tissues. The polypeptide is Hemoglobin cathodic subunit alpha (Anguilla anguilla (European freshwater eel)).